A 561-amino-acid polypeptide reads, in one-letter code: MLPEQQQQLISLIQAAVASVLPDAQAQVLLERPKVAAHGDVATNIAMQLAKPARRNPRELAQGIVDALMAETAARALVENAEIAGPGFINFRITAAARQAVIQAVAEQGEAYGHAPATGEKVLVEFVSANPTGPLHVGHARQAALGDAICRLYAATGRDVTREFYYNDAGNQIQNLAVSVQARARGIAPDSPDYPADGYKGDYIVDIAQDFIARKTLQAADGAAVTASGDVDNLDDIRVFAVAYLRREQDLDLQAFGLAFDNYYLESSLYTSGRVEQTVQALVAKGHTYEQDGALWLRTTELGTGDDKDRVMRKSEGGYTYFVPDVAYHKAKWERGFRHAVNIQGSDHHGTVARVRAGLQALEEGIPKDYPAYVLHKMVKVMRGGEEVKISKRAGSYVTLRDLIDWVGRDAVRYFLIQRRADTEFVFDIDLALSKSDENPVYYIQYAHARICSMIANAGADDARIAQADTALLTAPTEFALMQRLASFPQIVAQAAQELAPHHIAFWLRDCASDFHAWYNAERVLVDDEPLKLARLRLAATTRQVLANGLALLGVSAPQRM.

Positions 129–139 (ANPTGPLHVGH) match the 'HIGH' region motif.

It belongs to the class-I aminoacyl-tRNA synthetase family. As to quaternary structure, monomer.

The protein localises to the cytoplasm. The catalysed reaction is tRNA(Arg) + L-arginine + ATP = L-arginyl-tRNA(Arg) + AMP + diphosphate. The chain is Arginine--tRNA ligase from Bordetella petrii (strain ATCC BAA-461 / DSM 12804 / CCUG 43448).